Consider the following 355-residue polypeptide: Guanine nucleotide-binding protein G(o) subunit alpha (355 aa).

Positions Met-1–Gln-17 are enriched in low complexity. The segment at Met-1–Lys-24 is disordered. The N-myristoyl glycine moiety is linked to residue Gly-2. The S-palmitoyl cysteine moiety is linked to residue Cys-3. Positions Lys-32–Tyr-355 constitute a G-alpha domain. Residues Lys-35–Thr-48 are G1 motif. GTP is bound by residues Gly-40–Ser-47, Leu-176–Thr-182, Asp-201–Gly-205, Asp-201–Gln-206, Asn-271–Asp-274, and Ala-327. Positions 47 and 182 each coordinate Mg(2+). The G2 motif stretch occupies residues Asp-174 to Thr-182. Positions Phe-197–Gln-206 are G3 motif. The segment at Ile-267–Asp-274 is G4 motif. The tract at residues Thr-326–Thr-330 is G5 motif.

The protein belongs to the G-alpha family. G(i/o/t/z) subfamily. G proteins are composed of 3 units; alpha, beta and gamma. The alpha chain contains the guanine nucleotide binding site.

In terms of biological role, guanine nucleotide-binding proteins (G proteins) are involved as modulators or transducers in various transmembrane signaling systems. The G(o) protein function is not clear. The polypeptide is Guanine nucleotide-binding protein G(o) subunit alpha (Manduca sexta (Tobacco hawkmoth)).